A 354-amino-acid chain; its full sequence is Polyribonucleotide 5'-hydroxyl-kinase PYRAB01840 (354 aa).

36–43 (GDVDTGKT) is an ATP binding site.

It depends on a divalent metal cation as a cofactor.

The enzyme catalyses a 5'-end dephospho-2'-deoxyribonucleoside-DNA + ATP = a 5'-end 5'-phospho-2'-deoxyribonucleoside-DNA + ADP + H(+). It catalyses the reaction a 5'-end dephospho-ribonucleoside-RNA + ATP = a 5'-end 5'-phospho-ribonucleoside-RNA + ADP + H(+). Polynucleotide kinase that can phosphorylate the 5'-hydroxyl groups of both single-stranded RNA (ssRNA) and single-stranded DNA (ssDNA). Exhibits a strong preference for ssRNA. The polypeptide is Polyribonucleotide 5'-hydroxyl-kinase PYRAB01840 (Pyrococcus abyssi (strain GE5 / Orsay)).